The following is a 122-amino-acid chain: Piercer of microtubule wall 2 protein (122 aa).

The span at 1-23 (MARETDCDLDKKTSLTSDAEMRP) shows a compositional bias: basic and acidic residues. 2 disordered regions span residues 1-26 (MARETDCDLDKKTSLTSDAEMRPEPP) and 99-122 (QNNSLNVGPDRTRTIDSPNYQHTL). The span at 113–122 (IDSPNYQHTL) shows a compositional bias: polar residues.

It belongs to the PIERCE2 family. Microtubule inner protein component of sperm flagellar doublet microtubules. Interacts with CFAP53, ODAD1 and ODAD3; the interactions link the outer dynein arms docking complex (ODA-DC) to the internal microtubule inner proteins (MIP) in cilium axoneme.

It localises to the cytoplasm. The protein resides in the cytoskeleton. It is found in the cilium axoneme. Its subcellular location is the flagellum axoneme. Functionally, microtubule inner protein involved in the attachment of outer dynein arms (ODAs) to dynein-decorated doublet microtubules (DMTs) in cilia axoneme, which is required for motile cilia beating. This Mus musculus (Mouse) protein is Piercer of microtubule wall 2 protein.